A 631-amino-acid chain; its full sequence is Chaperone protein DnaK (631 aa).

Phosphothreonine; by autocatalysis is present on threonine 175. The disordered stretch occupies residues 586–631 (GAEGAAAGAGAAGAAGAGASAGSASGSDDDTVEAEVVDDDDDKDNK). A compositionally biased stretch (low complexity) spans 602 to 611 (AGASAGSASG). Residues 612–631 (SDDDTVEAEVVDDDDDKDNK) show a composition bias toward acidic residues.

This sequence belongs to the heat shock protein 70 family.

Acts as a chaperone. The sequence is that of Chaperone protein DnaK from Bifidobacterium longum subsp. infantis (strain ATCC 15697 / DSM 20088 / JCM 1222 / NCTC 11817 / S12).